A 918-amino-acid polypeptide reads, in one-letter code: Melanoma-associated antigen E1 (918 aa).

Disordered regions lie at residues 1–140 (MSLV…GSKA), 154–227 (EQRH…SNGL), and 367–388 (SQMS…ANNP). Residues 8 to 23 (SRRRRGGRANARRNNG) are compositionally biased toward basic residues. 3 stretches are compositionally biased toward polar residues: residues 70–96 (VPPT…SEMP), 113–126 (GLNT…SEGP), and 213–227 (EDPS…SNGL). MAGE domains lie at 459 to 658 (MEQN…YNEA) and 706 to 897 (LESK…YREA). Residues 704 to 918 (SRLESKARKL…RRPLIVRNLR (215 aa)) form an interaction with DTNA region.

In terms of assembly, interacts with DTNA. Interacts with TRIM28. As to expression, expressed in cell bodies and dendrites of hippocampal and Purkinje neurons. Also expressed in peripheral nerve, where it localizes to the perineurium and myelin (at protein level). Predominantly expressed in brain and at low levels in the heart, liver, kidney, spleen, testis, lung, thymus, placenta and skeletal muscle.

It is found in the cytoplasm. It localises to the perinuclear region. The protein resides in the nucleus. Its subcellular location is the cell membrane. In terms of biological role, may enhance ubiquitin ligase activity of RING-type zinc finger-containing E3 ubiquitin-protein ligases. Proposed to act through recruitment and/or stabilization of the Ubl-conjugating enzyme (E2) at the E3:substrate complex. This chain is Melanoma-associated antigen E1 (Magee1), found in Mus musculus (Mouse).